Consider the following 614-residue polypeptide: DNA mismatch repair protein MutL (614 aa).

Belongs to the DNA mismatch repair MutL/HexB family.

Functionally, this protein is involved in the repair of mismatches in DNA. It is required for dam-dependent methyl-directed DNA mismatch repair. May act as a 'molecular matchmaker', a protein that promotes the formation of a stable complex between two or more DNA-binding proteins in an ATP-dependent manner without itself being part of a final effector complex. In Chlorobium phaeovibrioides (strain DSM 265 / 1930) (Prosthecochloris vibrioformis (strain DSM 265)), this protein is DNA mismatch repair protein MutL.